Here is a 179-residue protein sequence, read N- to C-terminus: Large ribosomal subunit protein uL5 (179 aa).

The protein belongs to the universal ribosomal protein uL5 family. In terms of assembly, part of the 50S ribosomal subunit; part of the 5S rRNA/L5/L18/L25 subcomplex. Contacts the 5S rRNA and the P site tRNA. Forms a bridge to the 30S subunit in the 70S ribosome.

In terms of biological role, this is one of the proteins that bind and probably mediate the attachment of the 5S RNA into the large ribosomal subunit, where it forms part of the central protuberance. In the 70S ribosome it contacts protein S13 of the 30S subunit (bridge B1b), connecting the 2 subunits; this bridge is implicated in subunit movement. Contacts the P site tRNA; the 5S rRNA and some of its associated proteins might help stabilize positioning of ribosome-bound tRNAs. This chain is Large ribosomal subunit protein uL5, found in Synechococcus sp. (strain RCC307).